Consider the following 78-residue polypeptide: Acyl carrier protein (78 aa).

The 76-residue stretch at 1–76 (MSVAEKVKEI…DAISFIEKKK (76 aa)) folds into the Carrier domain. Ser36 carries the post-translational modification O-(pantetheine 4'-phosphoryl)serine.

It belongs to the acyl carrier protein (ACP) family. Post-translationally, 4'-phosphopantetheine is transferred from CoA to a specific serine of apo-ACP by AcpS. This modification is essential for activity because fatty acids are bound in thioester linkage to the sulfhydryl of the prosthetic group.

It is found in the cytoplasm. Its pathway is lipid metabolism; fatty acid biosynthesis. Its function is as follows. Carrier of the growing fatty acid chain in fatty acid biosynthesis. In Solidesulfovibrio magneticus (strain ATCC 700980 / DSM 13731 / RS-1) (Desulfovibrio magneticus), this protein is Acyl carrier protein.